Here is a 306-residue protein sequence, read N- to C-terminus: Acyl transferase (306 aa).

Catalysis depends on charge relay system residues serine 117, aspartate 214, and histidine 244.

The protein belongs to the LuxD family.

The protein operates within lipid metabolism; fatty acid reduction for biolumincescence. Acyl transferase is part of the fatty acid reductase system required for aldehyde biosynthesis; it produces fatty acids for the luminescent reaction. This Photobacterium phosphoreum protein is Acyl transferase.